Reading from the N-terminus, the 311-residue chain is p-hydroxybenzoic acid efflux pump subunit AaeA (311 aa).

The chain crosses the membrane as a helical span at residues 11 to 31; that stretch reads VGITVLVVVLAVIAIFNVWAF.

The protein belongs to the membrane fusion protein (MFP) (TC 8.A.1) family.

The protein localises to the cell inner membrane. In terms of biological role, forms an efflux pump with AaeB. In Yersinia pestis bv. Antiqua (strain Antiqua), this protein is p-hydroxybenzoic acid efflux pump subunit AaeA.